Consider the following 386-residue polypeptide: Succinate--CoA ligase [ADP-forming] subunit beta (386 aa).

The region spanning 9-244 is the ATP-grasp domain; sequence KEILRSYGVS…LDEEDPKEVE (236 aa). ATP-binding positions include K46, 53–55, E99, C102, and E107; that span reads GRG. N199 and D213 together coordinate Mg(2+). Substrate contacts are provided by residues N264 and 321 to 323; that span reads GIM.

It belongs to the succinate/malate CoA ligase beta subunit family. As to quaternary structure, heterotetramer of two alpha and two beta subunits. Requires Mg(2+) as cofactor.

It carries out the reaction succinate + ATP + CoA = succinyl-CoA + ADP + phosphate. It catalyses the reaction GTP + succinate + CoA = succinyl-CoA + GDP + phosphate. The protein operates within carbohydrate metabolism; tricarboxylic acid cycle; succinate from succinyl-CoA (ligase route): step 1/1. In terms of biological role, succinyl-CoA synthetase functions in the citric acid cycle (TCA), coupling the hydrolysis of succinyl-CoA to the synthesis of either ATP or GTP and thus represents the only step of substrate-level phosphorylation in the TCA. The beta subunit provides nucleotide specificity of the enzyme and binds the substrate succinate, while the binding sites for coenzyme A and phosphate are found in the alpha subunit. In Geobacillus thermodenitrificans (strain NG80-2), this protein is Succinate--CoA ligase [ADP-forming] subunit beta.